We begin with the raw amino-acid sequence, 617 residues long: 5-hydroxytryptamine receptor 2B (617 aa).

Residues 1 to 95 lie on the Extracellular side of the membrane; that stretch reads MLKTVTTAMA…LLVKMIAMAV (95 aa). N-linked (GlcNAc...) asparagine glycans are attached at residues asparagine 31, asparagine 41, asparagine 51, and asparagine 58. Residues 96–116 form a helical membrane-spanning segment; the sequence is VLGLMILVTIIGNVFVIAAII. Residues 117–128 lie on the Cytoplasmic side of the membrane; it reads LERNLQNVANYL. The chain crosses the membrane as a helical span at residues 129 to 149; that stretch reads VASLAVADLFVACLVMPLGAV. Residues 150-164 are Extracellular-facing; sequence YEISNGWILGPELCD. Cysteines 163 and 242 form a disulfide. The chain crosses the membrane as a helical span at residues 165–185; sequence IWTSCDVLCCTASILHLVAIA. Residues 186–205 are Cytoplasmic-facing; it reads ADRYWTVTNIDYNNLRTPRR. The chain crosses the membrane as a helical span at residues 206–226; the sequence is VFLMIFCVWFAALIVSLAPQF. Residues 227–256 lie on the Extracellular side of the membrane; it reads GWKDPDYMKRIEEQHCMVSQDVGYQIFATC. Residues 257-277 form a helical membrane-spanning segment; the sequence is CTFYVPLLVILFLYWKIYIIA. The Cytoplasmic portion of the chain corresponds to 278-534; sequence RKRIQRRAQK…EAKRERKAAQ (257 aa). The segment at 309 to 336 is disordered; that stretch reads RSKRRAERKRLEAGERTPVDGDGTGGQL. The span at 317 to 327 shows a compositional bias: basic and acidic residues; the sequence is KRLEAGERTPV. Residues 535–555 form a helical membrane-spanning segment; it reads TLAIITGAFVICWLPFFVMAL. Residues 556 to 570 are Extracellular-facing; it reads TMSLCKECEIHTAVA. The helical transmembrane segment at 571–591 threads the bilayer; it reads SLFLWLGYFNSTLNPVIYTIF. The Cytoplasmic portion of the chain corresponds to 592-617; sequence NPEFRRAFKRILFGRKAAARARSAKI.

It belongs to the G-protein coupled receptor 1 family.

The protein resides in the cell membrane. In terms of biological role, this is one of the several different receptors for 5-hydroxytryptamine (serotonin), a biogenic hormone that functions as a neurotransmitter, a hormone, and a mitogen. The activity of this receptor is mediated by G proteins which inhibit adenylate cyclase. The protein is 5-hydroxytryptamine receptor 2B (5-HT1B) of Drosophila melanogaster (Fruit fly).